A 299-amino-acid chain; its full sequence is MQMESYYGAFHADEAAFFFPHHVPASPELPFGLIASPEPEPEPEQAAAEARQSAFQEYGGAVHAGAPAAAGAVTTGGTNIHRRVMDVLGRMGGGGGGGEKGEGEEMEEEEEVPQRRRRGQGADVESSRGFRHMMRERQRREKLSQSYADLYAMVSSRSKGDKNSIVQSAAIYIHELKVARDQLQRRNEELKAQIMGHDEQQPCVTVQFEVDEPSSSIDSMIAALRRLKGMSVKARGIRSSMSGNRLWTEMNVETTIAACEVEKAVEEALKEVERNQPDSDAPFPGSKGWTQTSHVQNVF.

The segment at 90–127 is disordered; the sequence is RMGGGGGGGEKGEGEEMEEEEEVPQRRRRGQGADVESS. Residues 102–111 show a composition bias toward acidic residues; that stretch reads EGEEMEEEEE. The tract at residues 127 to 140 is basic motif; degenerate; it reads SRGFRHMMRERQRR. Positions 127-176 constitute a bHLH domain; that stretch reads SRGFRHMMRERQRREKLSQSYADLYAMVSSRSKGDKNSIVQSAAIYIHEL. Residues 141-176 form a helix-loop-helix motif region; that stretch reads EKLSQSYADLYAMVSSRSKGDKNSIVQSAAIYIHEL. The segment at 273 to 299 is disordered; that stretch reads ERNQPDSDAPFPGSKGWTQTSHVQNVF. The span at 288–299 shows a compositional bias: polar residues; the sequence is GWTQTSHVQNVF.

Belongs to the bHLH protein family. As to quaternary structure, interacts with TIFY10A/JAZ6, TIFY10B/JAZ7, TIFY11A/JAZ9, TIFY11C/JAZ11, and TIFY11D/JAZ12.

The protein localises to the nucleus. Its function is as follows. May act on an initial response of jasmonate-regulated gene expression toward drought tolerance as part of a BHLH148-TIFY11D/JAZ12-COI1A complex. This Oryza sativa subsp. japonica (Rice) protein is Transcription factor BHLH148.